The sequence spans 170 residues: uncharacterized protein (170 aa).

The next 3 membrane-spanning stretches (helical) occupy residues 31-51, 58-78, and 133-153; these read ILAVVNGSITIILSIIVFYIF, LFLITAGILTVFVFLYGLLLF, and IDFIVMIGMITISVIVVMLLF.

It to M.jannaschii MJ0554 and MJ0587.

It localises to the cell membrane. This is an uncharacterized protein from Methanocaldococcus jannaschii (strain ATCC 43067 / DSM 2661 / JAL-1 / JCM 10045 / NBRC 100440) (Methanococcus jannaschii).